The primary structure comprises 157 residues: Epithelial membrane protein 1 (157 aa).

A helical membrane pass occupies residues Met-1–Val-21. N-linked (GlcNAc...) asparagine glycosylation is found at Asn-43 and Asn-46. The next 3 helical transmembrane spans lie at Phe-67 to Phe-87, Phe-95 to Ile-115, and Tyr-134 to Leu-154.

Belongs to the PMP-22/EMP/MP20 family.

Its subcellular location is the membrane. The sequence is that of Epithelial membrane protein 1 (EMP1) from Homo sapiens (Human).